The following is a 250-amino-acid chain: Leucyl/phenylalanyl-tRNA--protein transferase (250 aa).

It belongs to the L/F-transferase family.

It localises to the cytoplasm. The catalysed reaction is N-terminal L-lysyl-[protein] + L-leucyl-tRNA(Leu) = N-terminal L-leucyl-L-lysyl-[protein] + tRNA(Leu) + H(+). It catalyses the reaction N-terminal L-arginyl-[protein] + L-leucyl-tRNA(Leu) = N-terminal L-leucyl-L-arginyl-[protein] + tRNA(Leu) + H(+). The enzyme catalyses L-phenylalanyl-tRNA(Phe) + an N-terminal L-alpha-aminoacyl-[protein] = an N-terminal L-phenylalanyl-L-alpha-aminoacyl-[protein] + tRNA(Phe). In terms of biological role, functions in the N-end rule pathway of protein degradation where it conjugates Leu, Phe and, less efficiently, Met from aminoacyl-tRNAs to the N-termini of proteins containing an N-terminal arginine or lysine. The protein is Leucyl/phenylalanyl-tRNA--protein transferase of Cupriavidus pinatubonensis (strain JMP 134 / LMG 1197) (Cupriavidus necator (strain JMP 134)).